The following is a 210-amino-acid chain: Guanylate kinase (210 aa).

Residues 6–186 enclose the Guanylate kinase-like domain; the sequence is GLLGIISAPS…ALIYLQSVIL (181 aa). 13–20 contacts ATP; it reads APSGAGKS.

It belongs to the guanylate kinase family.

It localises to the cytoplasm. It catalyses the reaction GMP + ATP = GDP + ADP. Essential for recycling GMP and indirectly, cGMP. The sequence is that of Guanylate kinase from Blochmanniella floridana.